The following is a 207-amino-acid chain: Outer-membrane lipoprotein LolB (207 aa).

Residues 1–21 form the signal peptide; it reads MTLPDFRLIRLLPLASLVLTA. The N-palmitoyl cysteine moiety is linked to residue Cys22. The S-diacylglycerol cysteine moiety is linked to residue Cys22.

The protein belongs to the LolB family. In terms of assembly, monomer.

It localises to the cell outer membrane. Functionally, plays a critical role in the incorporation of lipoproteins in the outer membrane after they are released by the LolA protein. This Salmonella agona (strain SL483) protein is Outer-membrane lipoprotein LolB.